The primary structure comprises 618 residues: C2H2 finger domain transcription factor sebA (618 aa).

The segment at 394-488 (GDATQSTEEM…RGRKQSLTDD (95 aa)) is disordered. Positions 406–416 (KKRVTSRRSLK) are enriched in basic residues. Composition is skewed to low complexity over residues 417–432 (KAST…AKKT) and 443–458 (SDTT…SSRQ). A compositionally biased stretch (polar residues) spans 459 to 469 (NSTANTSNSES). C2H2-type zinc fingers lie at residues 493–516 (FVCS…RSLH) and 522–544 (FECH…ARTH). Low complexity predominate over residues 582 to 597 (NAATSKSTTSESSDGT). Positions 582–618 (NAATSKSTTSESSDGTISDTSSVGGRPAKKRRRDDHV) are disordered. Over residues 608 to 618 (PAKKRRRDDHV) the composition is skewed to basic residues.

Its subcellular location is the nucleus. The protein localises to the cytoplasm. Its function is as follows. Transcription factor that is involved in the response to heat shock, oxidative stress, and poor nutrient conditions. Controls expression of oxidative stress response genes such as ccp1, cat1, cat2, sod2; as well as of heat shock genes such as hsf1, hsp30 and hsp90. Negatively controls the expression of the fumiquinazoline (fmq) cluster via binding to the STRE motifs at the fmqA-D promoters. Plays a role in virulence. The chain is C2H2 finger domain transcription factor sebA from Aspergillus fumigatus (strain ATCC MYA-4609 / CBS 101355 / FGSC A1100 / Af293) (Neosartorya fumigata).